A 750-amino-acid polypeptide reads, in one-letter code: Photosystem I P700 chlorophyll a apoprotein A1 (750 aa).

8 helical membrane passes run 70–93 (VFSA…FHGA), 156–179 (LYCT…FHYH), 195–219 (LNHH…HVSL), 291–309 (IAHH…GHMY), 346–369 (WHAQ…HHMY), 385–411 (LSLF…IFMV), 433–455 (AIIS…LYIH), and 531–549 (FLVH…LILL). [4Fe-4S] cluster contacts are provided by cysteine 573 and cysteine 582. Transmembrane regions (helical) follow at residues 589 to 610 (HVFL…HFSW) and 664 to 686 (LSAY…MFLF). Position 675 (histidine 675) interacts with chlorophyll a'. Residues methionine 683 and tyrosine 691 each contribute to the chlorophyll a site. Phylloquinone is bound at residue tryptophan 692. Residues 724-744 (TVGVTHYLLGGIATTWAFFLA) form a helical membrane-spanning segment.

The protein belongs to the PsaA/PsaB family. The PsaA/B heterodimer binds the P700 chlorophyll special pair and subsequent electron acceptors. PSI consists of a core antenna complex that captures photons, and an electron transfer chain that converts photonic excitation into a charge separation. The eukaryotic PSI reaction center is composed of at least 11 subunits. P700 is a chlorophyll a/chlorophyll a' dimer, A0 is one or more chlorophyll a, A1 is one or both phylloquinones and FX is a shared 4Fe-4S iron-sulfur center. is required as a cofactor.

It localises to the plastid. The protein localises to the chloroplast thylakoid membrane. The catalysed reaction is reduced [plastocyanin] + hnu + oxidized [2Fe-2S]-[ferredoxin] = oxidized [plastocyanin] + reduced [2Fe-2S]-[ferredoxin]. PsaA and PsaB bind P700, the primary electron donor of photosystem I (PSI), as well as the electron acceptors A0, A1 and FX. PSI is a plastocyanin-ferredoxin oxidoreductase, converting photonic excitation into a charge separation, which transfers an electron from the donor P700 chlorophyll pair to the spectroscopically characterized acceptors A0, A1, FX, FA and FB in turn. Oxidized P700 is reduced on the lumenal side of the thylakoid membrane by plastocyanin. The protein is Photosystem I P700 chlorophyll a apoprotein A1 of Oenothera elata subsp. hookeri (Hooker's evening primrose).